We begin with the raw amino-acid sequence, 583 residues long: Glucosidase 2 subunit beta (583 aa).

An N-terminal signal peptide occupies residues 1-26 (MVRLNLAVVALAAGALSASASASSSA). C91 and C115 form a disulfide bridge. The stretch at 130–252 (NRCEKVGKEY…LTLLLDDLAK (123 aa)) forms a coiled coil. One can recognise an MRH domain in the interval 455–562 (NKCFSKDMGE…KVATPAVCFP (108 aa)). 3 disulfides stabilise this stretch: C457–C470, C519–C548, and C533–C560. The Prevents secretion from ER motif lies at 580-583 (KDEL).

Heterodimer of a catalytic subunit alpha and a subunit beta.

Its subcellular location is the endoplasmic reticulum. In terms of biological role, subunit of glucosidase 2, which cleaves sequentially the 2 innermost alpha-1,3-linked glucose residues from the Glc(2)Man(9)GlcNAc(2) oligosaccharide precursor of immature glycoproteins in the endoplasmic reticulum (ER). Specifically required for the cleavage of the final glucose. The subunit beta retains the catalytic subunit alpha in the ER. This is Glucosidase 2 subunit beta from Mycosarcoma maydis (Corn smut fungus).